We begin with the raw amino-acid sequence, 661 residues long: Putative core protein L410 (661 aa).

Residues 1 to 11 are compositionally biased toward basic and acidic residues; that stretch reads MADNKGRRDTF. Residues 1-26 are disordered; it reads MADNKGRRDTFDVSGDTNTNATSNKR. The span at 15 to 25 shows a compositional bias: polar residues; that stretch reads GDTNTNATSNK. Residues 112-140 are a coiled coil; that stretch reads KKENKWSDKEYDEFRKELTNLLTGNRALE.

The protein localises to the virion. This Acanthamoeba polyphaga (Amoeba) protein is Putative core protein L410.